The chain runs to 476 residues: Doublesex and mab-3 related transcription factor 3 (476 aa).

The DM DNA-binding region spans 29–76 (CARCRNHGVLSWLKGHKRYCRFKDCTCEKCILIIERQRVMAAQVALRR). Disordered stretches follow at residues 89–130 (DSLR…RPAT) and 147–195 (GTLP…SKNC). The span at 102-121 (DAAATAATASQSSPASQASQ) shows a compositional bias: low complexity. Positions 176-185 (FSDKDTDQRS) are enriched in basic and acidic residues. A DMA domain is found at 255–290 (RPPLEVLKKIFPNQKPTVLELILKGCGGDLVSAVEV). Over residues 418-432 (NSTSVFRSSPVLSSR) the composition is skewed to polar residues. The segment at 418–476 (NSTSVFRSSPVLSSRTTEDPRISIPDDGCPIVAKQSIYTEDDYDERSDSSDSRILNTSS) is disordered.

This sequence belongs to the DMRT family.

The protein localises to the nucleus. Probable transcription factor that plays a role in configuring the spinal circuits controlling stride in vertebrates. Involved in neuronal specification within a specific subdivision of spinal cord neurons and in the development of a coordinated locomotor network controlling limb movements. May regulate transcription during sexual development. The protein is Doublesex and mab-3 related transcription factor 3 (Dmrt3) of Rattus norvegicus (Rat).